The chain runs to 448 residues: U-box domain-containing protein 30 (448 aa).

One can recognise a U-box domain in the interval 63–137 (DIPSVFICPI…YTWFSQKYVL (75 aa)). ARM repeat units lie at residues 179-219 (LMAR…SLDL) and 221-260 (SDSK…GLVE).

The catalysed reaction is S-ubiquitinyl-[E2 ubiquitin-conjugating enzyme]-L-cysteine + [acceptor protein]-L-lysine = [E2 ubiquitin-conjugating enzyme]-L-cysteine + N(6)-ubiquitinyl-[acceptor protein]-L-lysine.. Its pathway is protein modification; protein ubiquitination. Functionally, functions as an E3 ubiquitin ligase. The sequence is that of U-box domain-containing protein 30 (PUB30) from Arabidopsis thaliana (Mouse-ear cress).